Consider the following 127-residue polypeptide: Large ribosomal subunit protein bL20 (127 aa).

The protein belongs to the bacterial ribosomal protein bL20 family.

In terms of biological role, binds directly to 23S ribosomal RNA and is necessary for the in vitro assembly process of the 50S ribosomal subunit. It is not involved in the protein synthesizing functions of that subunit. The protein is Large ribosomal subunit protein bL20 of Bifidobacterium adolescentis (strain ATCC 15703 / DSM 20083 / NCTC 11814 / E194a).